Here is a 224-residue protein sequence, read N- to C-terminus: Ras-related protein Rab-32C (224 aa).

A disordered region spans residues 1–22 (MYSNKNDKDKDKDQNNENNKNN). 35–42 (GKLACGKT) contributes to the GTP binding site. The short motif at 57 to 65 (YKPTIGVDF) is the Effector region element. GTP is bound by residues 83 to 87 (DIAGQ) and 142 to 145 (NKCD). The tract at residues 203-224 (GFKLSDQSQSTETTPTQSKTCC) is disordered. The segment covering 209–224 (QSQSTETTPTQSKTCC) has biased composition (low complexity). Residues Cys223 and Cys224 are each lipidated (S-geranylgeranyl cysteine).

The protein belongs to the small GTPase superfamily. Rab family.

This chain is Ras-related protein Rab-32C (rab32C), found in Dictyostelium discoideum (Social amoeba).